The sequence spans 177 residues: Large ribosomal subunit protein uL6 (177 aa).

Belongs to the universal ribosomal protein uL6 family. As to quaternary structure, part of the 50S ribosomal subunit.

Its function is as follows. This protein binds to the 23S rRNA, and is important in its secondary structure. It is located near the subunit interface in the base of the L7/L12 stalk, and near the tRNA binding site of the peptidyltransferase center. The protein is Large ribosomal subunit protein uL6 of Mannheimia succiniciproducens (strain KCTC 0769BP / MBEL55E).